Consider the following 68-residue polypeptide: Conotoxin Em11.5 (68 aa).

The signal sequence occupies residues 1-26 (MMFRLTSVGCFLLVIACLNLFQVVLT). Cystine bridges form between Cys29–Cys43, Cys36–Cys48, Cys42–Cys52, and Cys47–Cys56. A Phenylalanine amide modification is found at Phe60. A propeptide spanning residues 64–68 (ATFQE) is cleaved from the precursor.

It belongs to the conotoxin I2 superfamily. Expressed by the venom duct.

It is found in the secreted. The protein is Conotoxin Em11.5 of Conus emaciatus (False virgin cone).